A 292-amino-acid polypeptide reads, in one-letter code: Tissue factor (292 aa).

The signal sequence occupies residues Met-1–Ala-32. The Extracellular portion of the chain corresponds to Ala-33–Met-250. Fibronectin type-III domains are found at residues Thr-35–Asn-126 and Gln-148–Thr-240. A glycan (N-linked (GlcNAc...) asparagine) is linked at Asn-41. 2 consecutive short sequence motifs (WKS motif) follow at residues Trp-44–Ser-46 and Trp-75–Ser-77. Cys-79 and Cys-87 are oxidised to a cystine. Asn-114, Asn-154, Asn-167, and Asn-182 each carry an N-linked (GlcNAc...) asparagine glycan. A disulfide bond links Cys-216 and Cys-239. A helical transmembrane segment spans residues Phe-251 to Val-271. Topologically, residues Tyr-272–Ala-292 are cytoplasmic. Cys-274 carries the S-palmitoyl cysteine lipid modification.

Belongs to the tissue factor family. In terms of assembly, interacts with HSPE; the interaction, inhibited by heparin, promotes the generation of activated factor X and activates coagulation in the presence of activated factor VII. In terms of tissue distribution, brain, heart.

Its subcellular location is the membrane. Initiates blood coagulation by forming a complex with circulating factor VII or VIIa. The [TF:VIIa] complex activates factors IX or X by specific limited proteolysis. TF plays a role in normal hemostasis by initiating the cell-surface assembly and propagation of the coagulation protease cascade. The protein is Tissue factor (F3) of Oryctolagus cuniculus (Rabbit).